We begin with the raw amino-acid sequence, 844 residues long: Translation initiation factor IF-2 (844 aa).

A compositionally biased stretch (polar residues) spans 120–132; sequence RNSVNLVQPQQEK. Positions 120–220 are disordered; that stretch reads RNSVNLVQPQ…SGKGFKKANP (101 aa). A compositionally biased stretch (basic and acidic residues) spans 161-175; the sequence is DEEKSSEDKSTESKN. The span at 205-219 shows a compositional bias: basic residues; the sequence is SKAKKASGKGFKKAN. In terms of domain architecture, tr-type G spans 343–510; it reads SRAPVVTIMG…AVLLQSEVLE (168 aa). Positions 352–359 are G1; it reads GHVDHGKT. 352–359 contributes to the GTP binding site; sequence GHVDHGKT. Positions 377-381 are G2; that stretch reads GITQH. The G3 stretch occupies residues 398–401; it reads DTPG. GTP contacts are provided by residues 398 to 402 and 452 to 455; these read DTPGH and NKID. Residues 452–455 are G4; that stretch reads NKID. The segment at 488-490 is G5; the sequence is SAK.

It belongs to the TRAFAC class translation factor GTPase superfamily. Classic translation factor GTPase family. IF-2 subfamily.

It localises to the cytoplasm. Its function is as follows. One of the essential components for the initiation of protein synthesis. Protects formylmethionyl-tRNA from spontaneous hydrolysis and promotes its binding to the 30S ribosomal subunits. Also involved in the hydrolysis of GTP during the formation of the 70S ribosomal complex. This Francisella philomiragia subsp. philomiragia (strain ATCC 25017 / CCUG 19701 / FSC 153 / O#319-036) protein is Translation initiation factor IF-2.